We begin with the raw amino-acid sequence, 100 residues long: Small ribosomal subunit protein uS14c (100 aa).

The protein belongs to the universal ribosomal protein uS14 family. In terms of assembly, part of the 30S ribosomal subunit.

It localises to the plastid. Its subcellular location is the chloroplast. Functionally, binds 16S rRNA, required for the assembly of 30S particles. The polypeptide is Small ribosomal subunit protein uS14c (Ostreococcus tauri).